The sequence spans 655 residues: p-hydroxybenzoic acid efflux pump subunit AaeB (655 aa).

The next 11 helical transmembrane spans lie at 13-33, 38-58, 69-89, 93-113, 121-141, 152-172, 370-390, 407-427, 431-451, 459-479, and 482-502; these read FAVK…HFQL, WAVL…GGEP, LRII…IAMI, LLMI…SSLV, WGLA…EPLL, EIVI…PRSI, LFWL…IAVV, FIYG…VIIP, QSML…GIEV, MGAL…TFHF, and FLDS…VILL.

The protein belongs to the aromatic acid exporter ArAE (TC 2.A.85) family.

Its subcellular location is the cell inner membrane. In terms of biological role, forms an efflux pump with AaeA. Could function as a metabolic relief valve, allowing to eliminate certain compounds when they accumulate to high levels in the cell. The polypeptide is p-hydroxybenzoic acid efflux pump subunit AaeB (Escherichia coli O7:K1 (strain IAI39 / ExPEC)).